The primary structure comprises 323 residues: uncharacterized protein (323 aa).

Positions 1 to 142 constitute a TIR domain; that stretch reads MPSVFFSYSH…QVAKAVREAA (142 aa).

This is an uncharacterized protein from Sinorhizobium fredii (strain NBRC 101917 / NGR234).